Reading from the N-terminus, the 860-residue chain is Eukaryotic translation initiation factor 3 subunit C (860 aa).

The segment at 1 to 76 (MSRFFYGNDS…SEESEEEDVV (76 aa)) is disordered. Acidic residues predominate over residues 10-51 (SDSDSSGSDEEELYSDEEVEQSEEESSEEDASSEEESSEDED). The region spanning 599 to 773 (FHMHINLELL…DAIVFRKGVE (175 aa)) is the PCI domain. A disordered region spans residues 812–860 (RDQGAGARGGRGPRGGGQARGGPRLPGGQQRRPGGQQFGGGALGGAIKA). Over residues 817-831 (GARGGRGPRGGGQAR) the composition is skewed to gly residues. Residues 832–846 (GGPRLPGGQQRRPGG) show a composition bias toward low complexity. Residues 847-860 (QQFGGGALGGAIKA) show a composition bias toward gly residues.

This sequence belongs to the eIF-3 subunit C family. Component of the eukaryotic translation initiation factor 3 (eIF-3) complex.

It localises to the cytoplasm. Its function is as follows. Component of the eukaryotic translation initiation factor 3 (eIF-3) complex, which is involved in protein synthesis of a specialized repertoire of mRNAs and, together with other initiation factors, stimulates binding of mRNA and methionyl-tRNAi to the 40S ribosome. The eIF-3 complex specifically targets and initiates translation of a subset of mRNAs involved in cell proliferation. This chain is Eukaryotic translation initiation factor 3 subunit C (nip1), found in Emericella nidulans (strain FGSC A4 / ATCC 38163 / CBS 112.46 / NRRL 194 / M139) (Aspergillus nidulans).